Here is a 357-residue protein sequence, read N- to C-terminus: DNA integrity scanning protein DisA (357 aa).

The DAC domain maps to 9–147; the sequence is DRKLLEILKT…DDIKYILRDS (139 aa). ATP is bound by residues Gly-76, Leu-94, and 107 to 111; that span reads TRHRT.

This sequence belongs to the DisA family. In terms of assembly, homooctamer. Mg(2+) serves as cofactor.

It catalyses the reaction 2 ATP = 3',3'-c-di-AMP + 2 diphosphate. Participates in a DNA-damage check-point that is active prior to asymmetric division when DNA is damaged. DisA forms globular foci that rapidly scan along the chromosomes during sporulation, searching for lesions. When a lesion is present, DisA pauses at the lesion site. This triggers a cellular response that culminates in a temporary block in sporulation initiation. Its function is as follows. Also has diadenylate cyclase activity, catalyzing the condensation of 2 ATP molecules into cyclic di-AMP (c-di-AMP). c-di-AMP acts as a signaling molecule that couples DNA integrity with progression of sporulation. The rise in c-di-AMP level generated by DisA while scanning the chromosome, operates as a positive signal that advances sporulation; upon encountering a lesion, the DisA focus arrests at the damaged site and halts c-di-AMP synthesis. This is DNA integrity scanning protein DisA from Clostridium acetobutylicum (strain ATCC 824 / DSM 792 / JCM 1419 / IAM 19013 / LMG 5710 / NBRC 13948 / NRRL B-527 / VKM B-1787 / 2291 / W).